Here is a 431-residue protein sequence, read N- to C-terminus: UDP-N-acetylglucosamine 1-carboxyvinyltransferase (431 aa).

22 to 23 (KN) is a phosphoenolpyruvate binding site. Arg-102 is a binding site for UDP-N-acetyl-alpha-D-glucosamine. Catalysis depends on Cys-126, which acts as the Proton donor. Position 126 is a 2-(S-cysteinyl)pyruvic acid O-phosphothioketal (Cys-126). Positions 318 and 340 each coordinate UDP-N-acetyl-alpha-D-glucosamine.

Belongs to the EPSP synthase family. MurA subfamily.

It is found in the cytoplasm. The enzyme catalyses phosphoenolpyruvate + UDP-N-acetyl-alpha-D-glucosamine = UDP-N-acetyl-3-O-(1-carboxyvinyl)-alpha-D-glucosamine + phosphate. It participates in cell wall biogenesis; peptidoglycan biosynthesis. Cell wall formation. Adds enolpyruvyl to UDP-N-acetylglucosamine. This chain is UDP-N-acetylglucosamine 1-carboxyvinyltransferase, found in Bartonella tribocorum (strain CIP 105476 / IBS 506).